Consider the following 218-residue polypeptide: rRNA methyltransferase 2, mitochondrial (218 aa).

S-adenosyl-L-methionine is bound by residues 59-62 (PGSW), Asp-80, 96-97 (DI), and Asp-133. Residue Lys-173 is the Proton acceptor of the active site.

The protein belongs to the class I-like SAM-binding methyltransferase superfamily. RNA methyltransferase RlmE family.

It is found in the mitochondrion. It catalyses the reaction a uridine in 21S rRNA + S-adenosyl-L-methionine = a 2'-O-methyluridine in 21S rRNA + S-adenosyl-L-homocysteine + H(+). In terms of biological role, S-adenosyl-L-methionine-dependent 2'-O-ribose methyltransferase that catalyzes the formation of the 2'-O-methyluridine corresponding to position 2791 in S.cerevisiae 21S mitochondrial large subunit ribosomal RNA (mtLSU rRNA), a universally conserved modification in the peptidyl transferase domain of the mtLSU rRNA. The chain is rRNA methyltransferase 2, mitochondrial from Schizosaccharomyces pombe (strain 972 / ATCC 24843) (Fission yeast).